A 140-amino-acid polypeptide reads, in one-letter code: ATP synthase epsilon chain (140 aa).

It belongs to the ATPase epsilon chain family. As to quaternary structure, F-type ATPases have 2 components, CF(1) - the catalytic core - and CF(0) - the membrane proton channel. CF(1) has five subunits: alpha(3), beta(3), gamma(1), delta(1), epsilon(1). CF(0) has three main subunits: a, b and c.

It is found in the cell inner membrane. Its function is as follows. Produces ATP from ADP in the presence of a proton gradient across the membrane. The chain is ATP synthase epsilon chain from Nitrosomonas europaea (strain ATCC 19718 / CIP 103999 / KCTC 2705 / NBRC 14298).